Reading from the N-terminus, the 285-residue chain is UPF0173 metal-dependent hydrolase Pnuc_1524 (285 aa).

Belongs to the UPF0173 family.

This Polynucleobacter asymbioticus (strain DSM 18221 / CIP 109841 / QLW-P1DMWA-1) (Polynucleobacter necessarius subsp. asymbioticus) protein is UPF0173 metal-dependent hydrolase Pnuc_1524.